The chain runs to 249 residues: Adenylate kinase (249 aa).

Gly-43 to Thr-48 lines the ATP pocket. Residues Ala-63–Val-92 are NMP. AMP-binding positions include Thr-64, Arg-69, Gly-90–Val-92, Gly-119–Arg-122, and Gln-126. Residues Gly-160–Asp-197 form an LID region. ATP contacts are provided by residues Arg-161 and Ser-170 to Tyr-171. AMP is bound by residues Arg-194 and Arg-205. Gln-233 contributes to the ATP binding site.

It belongs to the adenylate kinase family. AK2 subfamily. In terms of assembly, monomer.

It is found in the cytoplasm. Its subcellular location is the cytosol. The protein localises to the mitochondrion intermembrane space. It carries out the reaction AMP + ATP = 2 ADP. Its function is as follows. Catalyzes the reversible transfer of the terminal phosphate group between ATP and AMP. Plays an important role in cellular energy homeostasis and in adenine nucleotide metabolism. Adenylate kinase activity is critical for regulation of the phosphate utilization and the AMP de novo biosynthesis pathways. The sequence is that of Adenylate kinase from Debaryomyces hansenii (strain ATCC 36239 / CBS 767 / BCRC 21394 / JCM 1990 / NBRC 0083 / IGC 2968) (Yeast).